We begin with the raw amino-acid sequence, 243 residues long: Glucosamine-6-phosphate deaminase (243 aa).

Asp67 serves as the catalytic Proton acceptor; for enolization step. Asn137 (for ring-opening step) is an active-site residue. His139 serves as the catalytic Proton acceptor; for ring-opening step. Glu144 functions as the For ring-opening step in the catalytic mechanism.

This sequence belongs to the glucosamine/galactosamine-6-phosphate isomerase family. NagB subfamily.

The catalysed reaction is alpha-D-glucosamine 6-phosphate + H2O = beta-D-fructose 6-phosphate + NH4(+). The protein operates within amino-sugar metabolism; N-acetylneuraminate degradation; D-fructose 6-phosphate from N-acetylneuraminate: step 5/5. Catalyzes the reversible isomerization-deamination of glucosamine 6-phosphate (GlcN6P) to form fructose 6-phosphate (Fru6P) and ammonium ion. This chain is Glucosamine-6-phosphate deaminase, found in Staphylococcus epidermidis (strain ATCC 35984 / DSM 28319 / BCRC 17069 / CCUG 31568 / BM 3577 / RP62A).